Consider the following 105-residue polypeptide: ESAT-6-like protein EsxB (105 aa).

Residues 1–23 form a disordered region; sequence MSQGFKTEADVMRNTAHRVDDTN. Residues 7–21 are compositionally biased toward basic and acidic residues; that stretch reads TEADVMRNTAHRVDD.

It belongs to the WXG100 family. CFP-10 subfamily. As to quaternary structure, forms a tight 1:1 complex with EsxB.

The sequence is that of ESAT-6-like protein EsxB from Corynebacterium diphtheriae (strain ATCC 700971 / NCTC 13129 / Biotype gravis).